A 306-amino-acid polypeptide reads, in one-letter code: UDP-3-O-acyl-N-acetylglucosamine deacetylase (306 aa).

3 residues coordinate Zn(2+): histidine 79, histidine 238, and aspartate 242. Residue histidine 265 is the Proton donor of the active site.

It belongs to the LpxC family. Requires Zn(2+) as cofactor.

The enzyme catalyses a UDP-3-O-[(3R)-3-hydroxyacyl]-N-acetyl-alpha-D-glucosamine + H2O = a UDP-3-O-[(3R)-3-hydroxyacyl]-alpha-D-glucosamine + acetate. The protein operates within glycolipid biosynthesis; lipid IV(A) biosynthesis; lipid IV(A) from (3R)-3-hydroxytetradecanoyl-[acyl-carrier-protein] and UDP-N-acetyl-alpha-D-glucosamine: step 2/6. Catalyzes the hydrolysis of UDP-3-O-myristoyl-N-acetylglucosamine to form UDP-3-O-myristoylglucosamine and acetate, the committed step in lipid A biosynthesis. The polypeptide is UDP-3-O-acyl-N-acetylglucosamine deacetylase (Hamiltonella defensa subsp. Acyrthosiphon pisum (strain 5AT)).